A 138-amino-acid polypeptide reads, in one-letter code: MLSPRKVKYRKKQRGRLSGEAQKGNKISFGEYGLVSLEADFITARQIEAARVAMTRRVKRGGKVWIRIFPDIPYTKKPAETRMGKGKGGVDHWNAPVKLGTVMFEMSGVPRELAESAMMLASSKLPVKTTFVVRRDLR.

Residues 1–15 (MLSPRKVKYRKKQRG) show a composition bias toward basic residues. The tract at residues 1–21 (MLSPRKVKYRKKQRGRLSGEA) is disordered.

This sequence belongs to the universal ribosomal protein uL16 family. Part of the 50S ribosomal subunit.

Binds 23S rRNA and is also seen to make contacts with the A and possibly P site tRNAs. In Borrelia duttonii (strain Ly), this protein is Large ribosomal subunit protein uL16.